The following is a 285-amino-acid chain: 1-acyl-sn-glycerol-3-phosphate acyltransferase alpha (285 aa).

The signal sequence occupies residues 1 to 28 (MELWPGAWTALLLLLLLLLSTLWFCSSS). Residues 29–34 (AKYFFK) are Lumenal-facing. A helical membrane pass occupies residues 35-55 (MAFYNGWILFLAILAIPVCAV). Topologically, residues 56 to 124 (RGRNVENMKI…PDRCVPIAKR (69 aa)) are cytoplasmic. The HXXXXD motif signature appears at 101–106 (HQSSLD). Residues 125-145 (ELLWAGSAGLACWLAGIIFID) traverse the membrane as a helical segment. The Lumenal segment spans residues 146–189 (RKRTGDAISVMSEVAQTLLTQDVRVWVFPEGTRNHNGSMLPFKR). Residues 175 to 178 (EGTR) carry the EGTR motif motif.

It belongs to the 1-acyl-sn-glycerol-3-phosphate acyltransferase family. As to expression, widely expressed.

The protein resides in the endoplasmic reticulum membrane. The catalysed reaction is a 1-acyl-sn-glycero-3-phosphate + an acyl-CoA = a 1,2-diacyl-sn-glycero-3-phosphate + CoA. It catalyses the reaction 1-(9Z-octadecenoyl)-sn-glycero-3-phosphate + (9Z)-octadecenoyl-CoA = 1,2-di-(9Z-octadecenoyl)-sn-glycero-3-phosphate + CoA. It carries out the reaction 1-(9Z-octadecenoyl)-sn-glycero-3-phosphate + hexadecanoyl-CoA = 1-(9Z)-octadecenoyl-2-hexadecanoyl-sn-glycero-3-phosphate + CoA. The enzyme catalyses heptadecanoyl-CoA + 1-(9Z-octadecenoyl)-sn-glycero-3-phosphate = 1-(9Z)-octadecenoyl-2-heptadecanoyl-sn-glycero-3-phosphate + CoA. The catalysed reaction is 1-(9Z-octadecenoyl)-sn-glycero-3-phosphate + octadecanoyl-CoA = 1-(9Z-octadecenoyl)-2-octadecanoyl-sn-glycero-3-phosphate + CoA. It catalyses the reaction 1-(9Z-octadecenoyl)-sn-glycero-3-phosphate + (9Z,12Z)-octadecadienoyl-CoA = 1-(9Z)-octadecenoyl-2-(9Z,12Z)-octadecadienoyl-sn-glycero-3-phosphate + CoA. It carries out the reaction 1-(9Z-octadecenoyl)-sn-glycero-3-phosphate + tetradecanoyl-CoA = 1-(9Z)-octadecenoyl-2-tetradecanoyl-sn-glycero-3-phosphate + CoA. The enzyme catalyses pentadecanoyl-CoA + 1-(9Z-octadecenoyl)-sn-glycero-3-phosphate = 1-(9Z)-octadecenoyl-2-pentadecanoyl-sn-glycero-3-phosphate + CoA. The catalysed reaction is 1-hexadecanoyl-sn-glycero-3-phosphate + (9Z)-octadecenoyl-CoA = 1-hexadecanoyl-2-(9Z-octadecenoyl)-sn-glycero-3-phosphate + CoA. It catalyses the reaction 1-(9Z,12Z,15Z)-octadecatrienoyl-sn-glycero-3-phosphate + (9Z)-octadecenoyl-CoA = 1-(9Z,12Z,15Z)-octadecatrienoyl-2-(9Z)-octadecenoyl-sn-glycero-3-phosphate + CoA. It carries out the reaction 1-(6Z,9Z,12Z-octadecatrienoyl)-sn-glycero-3-phosphate + (9Z)-octadecenoyl-CoA = (6Z,9Z,12Z)-octadecatrienoyl-2-(9Z)-octadecenoyl-sn-glycero-3-phosphate + CoA. The enzyme catalyses 1-eicosanoyl-sn-glycero-3-phosphate + (9Z)-octadecenoyl-CoA = 1-eicosanoyl-2-(9Z)-octadecenoyl-sn-glycero-3-phosphate + CoA. The catalysed reaction is 1-tetradecanoyl-sn-glycerol 3-phosphate + (9Z)-octadecenoyl-CoA = 1-tetradecanoyl-2-(9Z)-octadecenoyl-sn-glycero-3-phosphate + CoA. It catalyses the reaction 1-(9Z-octadecenoyl)-sn-glycero-3-phosphate + (5Z,8Z,11Z,14Z)-eicosatetraenoyl-CoA = 1-(9Z)-octadecenoyl-2-(5Z,8Z,11Z,14Z)-eicosatetraenoyl-sn-glycero-3-phosphate + CoA. It carries out the reaction 1-(9Z-octadecenoyl)-sn-glycero-3-phosphate + dodecanoyl-CoA = 1-(9Z)-octadecenoyl-2-dodecanoyl-sn-glycero-3-phosphate + CoA. The enzyme catalyses (6Z)-octadecenoyl-CoA + 1-(9Z-octadecenoyl)-sn-glycero-3-phosphate = 1-(9Z)-octadecenoyl-2-(6Z)-octadecenoyl-sn-glycero-3-phosphate + CoA. The catalysed reaction is (11Z)-octadecenoyl-CoA + 1-(9Z-octadecenoyl)-sn-glycero-3-phosphate = 1-(9Z)-octadecenoyl-2-(11Z)-octadecenoyl-sn-glycero-3-phosphate + CoA. It catalyses the reaction (9Z)-hexadecenoyl-CoA + 1-(9Z-octadecenoyl)-sn-glycero-3-phosphate = 1-(9Z-octadecenoyl)-2-(9Z-hexadecenoyl)-sn-glycero-3-phosphate + CoA. The protein operates within phospholipid metabolism; CDP-diacylglycerol biosynthesis; CDP-diacylglycerol from sn-glycerol 3-phosphate: step 2/3. Converts 1-acyl-sn-glycerol-3-phosphate (lysophosphatidic acid or LPA) into 1,2-diacyl-sn-glycerol-3-phosphate (phosphatidic acid or PA) by incorporating an acyl moiety at the sn-2 position of the glycerol backbone. In Mus musculus (Mouse), this protein is 1-acyl-sn-glycerol-3-phosphate acyltransferase alpha (Agpat1).